The sequence spans 513 residues: V-type proton ATPase subunit B (513 aa).

ATP is bound at residue Arg-375. Over residues 484–503 (ADRKGKGKDKPTTKDTRDTA) the composition is skewed to basic and acidic residues. Positions 484 to 513 (ADRKGKGKDKPTTKDTRDTAAPEEENLIDA) are disordered. The span at 504–513 (APEEENLIDA) shows a compositional bias: acidic residues.

It belongs to the ATPase alpha/beta chains family. As to quaternary structure, V-ATPase is a heteromultimeric enzyme composed of a peripheral catalytic V1 complex (components A to H) attached to an integral membrane V0 proton pore complex (components: a, c, c', c'', d, e, f and VOA1).

It is found in the vacuole membrane. Non-catalytic subunit of the V1 complex of vacuolar(H+)-ATPase (V-ATPase), a multisubunit enzyme composed of a peripheral complex (V1) that hydrolyzes ATP and a membrane integral complex (V0) that translocates protons. V-ATPase is responsible for acidifying and maintaining the pH of intracellular compartments. This is V-type proton ATPase subunit B from Neurospora crassa (strain ATCC 24698 / 74-OR23-1A / CBS 708.71 / DSM 1257 / FGSC 987).